Consider the following 389-residue polypeptide: Glutamate 5-kinase (389 aa).

Residue K17 participates in ATP binding. S57, D144, and N156 together coordinate substrate. 176 to 177 (SD) is a binding site for ATP. The 78-residue stretch at 282 to 359 (AGEIHVDAGA…NEIETILGYV (78 aa)) folds into the PUA domain.

Belongs to the glutamate 5-kinase family.

It is found in the cytoplasm. It carries out the reaction L-glutamate + ATP = L-glutamyl 5-phosphate + ADP. The protein operates within amino-acid biosynthesis; L-proline biosynthesis; L-glutamate 5-semialdehyde from L-glutamate: step 1/2. Catalyzes the transfer of a phosphate group to glutamate to form L-glutamate 5-phosphate. The protein is Glutamate 5-kinase of Agrobacterium fabrum (strain C58 / ATCC 33970) (Agrobacterium tumefaciens (strain C58)).